A 211-amino-acid polypeptide reads, in one-letter code: Peroxiredoxin (211 aa).

The Thioredoxin domain maps to Pro2 to Val156. The active-site Cysteine sulfenic acid (-SOH) intermediate is the Cys44. Arg119 is a binding site for substrate. Cys198 and Cys204 are disulfide-bonded.

It belongs to the peroxiredoxin family. Prx6 subfamily. As to quaternary structure, homodecamer. Pentamer of dimers that assemble into a ring structure.

The protein localises to the cytoplasm. It catalyses the reaction a hydroperoxide + [thioredoxin]-dithiol = an alcohol + [thioredoxin]-disulfide + H2O. Thiol-specific peroxidase that catalyzes the reduction of hydrogen peroxide and organic hydroperoxides to water and alcohols, respectively. Plays a role in cell protection against oxidative stress by detoxifying peroxides. This is Peroxiredoxin from Methanothermobacter marburgensis (strain ATCC BAA-927 / DSM 2133 / JCM 14651 / NBRC 100331 / OCM 82 / Marburg) (Methanobacterium thermoautotrophicum).